We begin with the raw amino-acid sequence, 352 residues long: Transcription factor BHLH156 (352 aa).

Positions G59–K141 are disordered. The basic motif stretch occupies residues R130–R143. One can recognise a bHLH domain in the interval R130–L179. The interval V144–L179 is helix-loop-helix motif. The tract at residues E194–R216 is disordered. Over residues A206–R216 the composition is skewed to low complexity.

Belongs to the bHLH protein family. In terms of assembly, forms homodimers. Interacts with IRO2 in the nucleus. In terms of tissue distribution, expressed in the meristematic zone of lateral and primary roots.

The protein localises to the nucleus. Transcription factor involved in positive regulation of genes involved in strategy II iron acquisition, including genes for mugineic acid (MA) family phytosiderophores biosynthesis, and genes involved in S-adenosylmethionine cycle and iron transport. May play a role in the regulation of iron deficiency response by promoting the nuclear localization of IRO2. Possesses transactivation activity in yeast. The chain is Transcription factor BHLH156 from Oryza sativa subsp. japonica (Rice).